We begin with the raw amino-acid sequence, 135 residues long: Crustacean hyperglycemic hormones A* (135 aa).

Residues 1–26 (MVSFRTMWSVVVVVVVASLASSGVQG) form the signal peptide. Position 62 is a pyrrolidone carboxylic acid (glutamine 62). Disulfide bonds link cysteine 68–cysteine 104, cysteine 84–cysteine 100, and cysteine 87–cysteine 113. The residue at position 133 (valine 133) is a Valine amide.

The protein belongs to the arthropod CHH/MIH/GIH/VIH hormone family. As to expression, produced by the medulla terminalis X-organ in the eyestalks and transported to the sinus gland where they are stored and released.

The protein resides in the secreted. Hormone found in the sinus gland of isopods and decapods which controls the blood sugar level. Has a secretagogue action over the amylase released from the midgut gland. May act as a stress hormone and may be involved in the control of molting and reproduction. This Faxonius limosus (Spinycheek crayfish) protein is Crustacean hyperglycemic hormones A* (CHHA*).